The following is a 765-amino-acid chain: Probable beta-glucosidase M (765 aa).

The first 19 residues, 1-19 (MHSISALLSLLGGLALSSA), serve as a signal peptide directing secretion. N-linked (GlcNAc...) asparagine glycans are attached at residues Asn24, Asn71, Asn93, Asn126, and Asn258. Residue Asp286 is part of the active site. 6 N-linked (GlcNAc...) asparagine glycosylation sites follow: Asn314, Asn321, Asn432, Asn519, Asn541, and Asn647.

This sequence belongs to the glycosyl hydrolase 3 family.

The protein resides in the secreted. The catalysed reaction is Hydrolysis of terminal, non-reducing beta-D-glucosyl residues with release of beta-D-glucose.. The protein operates within glycan metabolism; cellulose degradation. In terms of biological role, beta-glucosidases are one of a number of cellulolytic enzymes involved in the degradation of cellulosic biomass. Catalyzes the last step releasing glucose from the inhibitory cellobiose. This is Probable beta-glucosidase M (bglM) from Aspergillus niger (strain ATCC MYA-4892 / CBS 513.88 / FGSC A1513).